A 148-amino-acid chain; its full sequence is Lysozyme C, non-stomach isozyme (148 aa).

An N-terminal signal peptide occupies residues 1–18 (MKALLILGLLLFSVAVQG). In terms of domain architecture, C-type lysozyme spans 19–148 (KVFERCELAR…LTSYIQGCGV (130 aa)). 4 disulfides stabilise this stretch: Cys-24–Cys-146, Cys-48–Cys-134, Cys-83–Cys-99, and Cys-95–Cys-113. Catalysis depends on residues Glu-53 and Asp-71.

This sequence belongs to the glycosyl hydrolase 22 family. Expressed in blood cells.

The enzyme catalyses Hydrolysis of (1-&gt;4)-beta-linkages between N-acetylmuramic acid and N-acetyl-D-glucosamine residues in a peptidoglycan and between N-acetyl-D-glucosamine residues in chitodextrins.. Lysozymes have primarily a bacteriolytic function; those in tissues and body fluids are associated with the monocyte-macrophage system and enhance the activity of immunoagents. The protein is Lysozyme C, non-stomach isozyme (LYS) of Bos taurus (Bovine).